Reading from the N-terminus, the 901-residue chain is Protein translocase subunit SecA (901 aa).

Residues Gln-87, 105 to 109 (GEGKT), and Asp-512 each bind ATP. Residues 855-891 (QQLSHQDDETAAAAALAEQTGERKVGRNDPCPCGSGK) are disordered. Cys-885, Cys-887, Cys-896, and His-897 together coordinate Zn(2+).

The protein belongs to the SecA family. As to quaternary structure, monomer and homodimer. Part of the essential Sec protein translocation apparatus which comprises SecA, SecYEG and auxiliary proteins SecDF-YajC and YidC. Requires Zn(2+) as cofactor.

Its subcellular location is the cell inner membrane. The protein resides in the cytoplasm. The enzyme catalyses ATP + H2O + cellular proteinSide 1 = ADP + phosphate + cellular proteinSide 2.. In terms of biological role, part of the Sec protein translocase complex. Interacts with the SecYEG preprotein conducting channel. Has a central role in coupling the hydrolysis of ATP to the transfer of proteins into and across the cell membrane, serving both as a receptor for the preprotein-SecB complex and as an ATP-driven molecular motor driving the stepwise translocation of polypeptide chains across the membrane. In Cronobacter sakazakii (strain ATCC BAA-894) (Enterobacter sakazakii), this protein is Protein translocase subunit SecA.